Here is a 117-residue protein sequence, read N- to C-terminus: Small ribosomal subunit protein eS25 (117 aa).

Residues 1–38 (MPPKKDAKSSAKQPQKTQKKKEGSGGGKAKKKKWSKGK) form a disordered region. The segment covering 28–37 (KAKKKKWSKG) has biased composition (basic residues).

This sequence belongs to the eukaryotic ribosomal protein eS25 family.

This chain is Small ribosomal subunit protein eS25 (RpS25), found in Drosophila melanogaster (Fruit fly).